The following is a 152-amino-acid chain: MDNVQPKIKHRPFCFSVKGHVKMLRLALTVTSMTFFIIAQAPEPYIVITGFEVTVILFFILLYVLRLDRLMKWLFWPLLDIINSLVTTVFMLIVSVLALIPETTTLTVGGGVFALVTAVCCLADGALIYRKLLFNPSGPYQKKPVHEKKEVL.

In terms of domain architecture, MARVEL spans 13–133 (FCFSVKGHVK…DGALIYRKLL (121 aa)). A run of 3 helical transmembrane segments spans residues 45–65 (YIVITGFEVTVILFFILLYVL), 81–101 (IINSLVTTVFMLIVSVLALIP), and 108–128 (VGGGVFALVTAVCCLADGALI).

It belongs to the chemokine-like factor family. In terms of tissue distribution, isoform 1, isoform 2, isoform 3 and isoform 4 have highest expression levels in adult spleen, lung, testis, ovary, peripheral blood leukocyte, placenta, pancreas, and in fetal brain, skeletal muscle, thymus and heart. Lower expression levels in adult skeletal muscle, liver, thymus colon, prostate and fetal spleen and liver.

It is found in the secreted. Its subcellular location is the membrane. Partly inhibited by interleukin 10. Functionally, may play an important role in inflammation and regeneration of skeletal muscle. Essential for embryonic development. Has chemotactic response in monocytes, neutrophils and lymphocytes. Binds CCR4. This Homo sapiens (Human) protein is Chemokine-like factor (CKLF).